A 221-amino-acid polypeptide reads, in one-letter code: Ras-related protein Rab-27A (221 aa).

S2 bears the N-acetylserine mark. The residue at position 2 (S2) is a Phosphoserine. 16-24 (GDSGVGKTS) provides a ligand contact to GTP. Residues 38–46 (FITTVGIDF) carry the Effector region motif. Residues 74–78 (DTAGQ), 133–136 (NKSD), and 163–165 (SAA) contribute to the GTP site. An intrachain disulfide couples C123 to C188. Residues C219 and C221 are each lipidated (S-geranylgeranyl cysteine). C221 carries the cysteine methyl ester modification.

This sequence belongs to the small GTPase superfamily. Rab family. Binds SYTL1, SYTL2, SLAC2B, MYRIP, SYTL3, SYTL4, SYTL5 and MLPH. Interacts with UNC13D. Interacts with RPH3A and RPH3A. Does not interact with the BLOC-3 complex (heterodimer of HPS1 and HPS4). Interacts (GDP-bound form preferentially) with DENND10. In terms of tissue distribution, detected in melanocytes. Expressed abundantly in the stomach and is predominantly localized at the apical region of gastric-surface mucus cells. Also expressed in the thymus and lung.

The protein localises to the membrane. It localises to the melanosome. Its subcellular location is the late endosome. The protein resides in the lysosome. The enzyme catalyses GTP + H2O = GDP + phosphate + H(+). Regulated by guanine nucleotide exchange factors (GEFs) which promote the exchange of bound GDP for free GTP, GTPase activating proteins (GAPs) which increase the GTP hydrolysis activity, and GDP dissociation inhibitors which inhibit the dissociation of the nucleotide from the GTPase. Activated by GEFs such as DENND10. Its function is as follows. Small GTPase which cycles between active GTP-bound and inactive GDP-bound states. In its active state, binds to a variety of effector proteins to regulate homeostasis of late endocytic pathway, including endosomal positioning, maturation and secretion. Plays a role in cytotoxic granule exocytosis in lymphocytes. Required for both granule maturation and granule docking and priming at the immunologic synapse. In Mus musculus (Mouse), this protein is Ras-related protein Rab-27A (Rab27a).